A 517-amino-acid polypeptide reads, in one-letter code: Glycosyltransferase family 92 protein F55C10.4 (517 aa).

The chain crosses the membrane as a helical span at residues 9-31 (FLKYFIIFTFFCVTFCFLKLCLG). The GT92 domain maps to 156 to 454 (KPVIFCVSPQ…FKCYNESFYH (299 aa)).

It belongs to the glycosyltransferase 92 family.

Its subcellular location is the membrane. The sequence is that of Glycosyltransferase family 92 protein F55C10.4 from Caenorhabditis elegans.